We begin with the raw amino-acid sequence, 441 residues long: Hexane cyclase gkaB (441 aa).

The first 25 residues, 1-25 (MTKFLAGAAIVLAVAFGSFFSQSST), serve as a signal peptide directing secretion. N-linked (GlcNAc...) asparagine glycosylation is found at Asn-77, Asn-153, Asn-184, and Asn-308.

This sequence belongs to the Diels-Alderase family.

The protein operates within mycotoxin biosynthesis. Its function is as follows. Hexane cyclase; part of the gene cluster that mediates the biosynthesis of GKK1032, fungal natural products containing a macrocyclic para-cyclophane connected to a decahydrofluorene ring system that show potent antitumor activities. Within the pathway, gkaB functions synergistically with gkaX and gkaZ to form the cyclophane. The pathway begins with the PKS-NRPS gkaA which, with the help of the trans-enoyl reductase gkaC, synthesizes the polyketide-tyrosyl acyl thioester product which can be reductively off-loaded by the terminal reductase (R) domain in gkaA. The alpha/beta hydrolase gkaG is then required to catalyze the subsequent Knoevenagel condensation that affords the 3-pyrrolin-2-one ring, whereas the three proteins gkaB, gkaX and gkaZ then function synergistically to form the cyclophane. The chain is Hexane cyclase gkaB from Penicillium citrinum.